Reading from the N-terminus, the 1072-residue chain is Isoleucine--tRNA ligase, cytoplasmic (1072 aa).

A 'HIGH' region motif is present at residues 47 to 57 (PFATGTPHYGH). Residue Lys486 forms a Glycyl lysine isopeptide (Lys-Gly) (interchain with G-Cter in ubiquitin) linkage. The 'KMSKS' region signature appears at 602 to 606 (KMSKS). Lys605 contributes to the ATP binding site. Phosphoserine is present on residues Ser829 and Ser1059.

It belongs to the class-I aminoacyl-tRNA synthetase family.

It localises to the cytoplasm. It carries out the reaction tRNA(Ile) + L-isoleucine + ATP = L-isoleucyl-tRNA(Ile) + AMP + diphosphate. The sequence is that of Isoleucine--tRNA ligase, cytoplasmic (ILS1) from Saccharomyces cerevisiae (strain ATCC 204508 / S288c) (Baker's yeast).